A 286-amino-acid chain; its full sequence is Probable ketoamine kinase YniA (286 aa).

Asp-91–Leu-93 serves as a coordination point for ATP. Asp-193 acts as the Proton acceptor in catalysis.

This sequence belongs to the fructosamine kinase family.

Its function is as follows. Ketoamine kinase that phosphorylates ketoamines on the third carbon of the sugar moiety to generate ketoamine 3-phosphate. This is Probable ketoamine kinase YniA (yniA) from Escherichia coli O157:H7.